Here is a 282-residue protein sequence, read N- to C-terminus: Bifunctional protein FolD (282 aa).

NADP(+) is bound by residues 166 to 168 and Ile-232; that span reads GAS.

The protein belongs to the tetrahydrofolate dehydrogenase/cyclohydrolase family. In terms of assembly, homodimer.

It carries out the reaction (6R)-5,10-methylene-5,6,7,8-tetrahydrofolate + NADP(+) = (6R)-5,10-methenyltetrahydrofolate + NADPH. The enzyme catalyses (6R)-5,10-methenyltetrahydrofolate + H2O = (6R)-10-formyltetrahydrofolate + H(+). It functions in the pathway one-carbon metabolism; tetrahydrofolate interconversion. Catalyzes the oxidation of 5,10-methylenetetrahydrofolate to 5,10-methenyltetrahydrofolate and then the hydrolysis of 5,10-methenyltetrahydrofolate to 10-formyltetrahydrofolate. The sequence is that of Bifunctional protein FolD from Haemophilus influenzae (strain PittEE).